We begin with the raw amino-acid sequence, 541 residues long: MHTLIKGVLEEILEAEVIIEYPKDREHGHYATPIAFNLAKVFKKSPLAIAEELALKIGSHEKTQGFFDRVVACKGYINFTLSLDFLERFTQKALELKEQFGSQVKSERSQKIFLEFVSANPTGPLHIGHARGAVFGDSLAKIARFLGHEVLCEYYVNDMGSQIRLLGVSVWLAYKEHVLKESVTYPEVFYKGEYIIEIAKKAHNDLEPSLFKENEETIIEVLSDYAKDLMLLEIKGNLDALDIHFDSYASEKEVFKHKDAVFDRLEKANALYEKDSKTWLKSSLYQDESDRVLIKEDKSYTYLAGDIVYHDEKFQQNYTKYINIWGADHHGYIARVKASLEFLGYDSSKLEVLLAQMVRLLKDNEPYKMSKRAGNFILIKDVIDDVGKDALRFIFLSKRLDTHLEFDVNTLKKQDSSNPIYYIHYANSRIHTMLEKSPFSKEEILQTPLKNLNAEEKYLLFSALSLPKAVESSFEEYGLQKMCEYAKTLASEFHRFYNAGKILDTPKAKELLKICLMVSLSLTNAFKLLGIEIKTKISSKD.

The 'HIGH' region signature appears at 119–129 (ANPTGPLHIGH).

It belongs to the class-I aminoacyl-tRNA synthetase family. As to quaternary structure, monomer.

Its subcellular location is the cytoplasm. It carries out the reaction tRNA(Arg) + L-arginine + ATP = L-arginyl-tRNA(Arg) + AMP + diphosphate. The sequence is that of Arginine--tRNA ligase (argS) from Helicobacter pylori (strain J99 / ATCC 700824) (Campylobacter pylori J99).